The primary structure comprises 2326 residues: MPGAIESSPSEWLQLELRRICANVLQLDTKDVDPQRSFLSLGGDSLLAIKILAQCRAQGITINIADIMAATTLESLYSMAQGPAELASSSTSDNASDKDSSLDDSETGALTPTTDAGSSLADTLSPEMKAKLSALSVSQDTAIQAVVPCSAIQDRMLVSQLQNPHLYSCCFVLRLTHSHPGLPVDAKRLGTAWGEVVKRHSSLRTVLVESTQRPGHYNQVILAGIIPAVEHYEGADHLGSVKFNVNNPIVFQPHSIPHRLQLVQVSPSEVYLKFDISHLLIDGQSAEVLLKDLSDAYRDGGLAAAPLSYADYVSSYLLEPAQLNTSRKESGMEMSPLTVPMDRPNEGLFDFQTVSANVPLDSRLVQSVCARYSVTLATVCQLAWGLVLRCYAGTDSVCFSYVNSGRSMSIPGVQEVIGPIVQTSMCSIQLGPADELPKILQRIHRDALQAMSQLSPLEANSTSKSARQLSNTTMSFQRALDDAAAQRAGLLVKIEGKANPTDYDISLGIAAGADGLSVDLDFWGSRLDEESARTMLGAFEAAIRGIIDSPDSTVSNISLLSPGEVSQLAQWNASIPKPERVCVHDKIMEISKLQPGAAAVNSWDGNLTYHDLTVQASTLAHHLRDQLGVGPERFVGICMDKSKWAIVSMLAVLMAGGIVVPLGVSHPRARIRELLNDTAAVALLVDGKHGDRLAGLEVENAAMLTVDQQLLDSLPTIPKPPVSGVTPDNAAWVIYTSGSTGVPKGVVLLHQNISTSVIAHGAVFGVNCVTRTAQFASYTFDVSLSDIVMTLFHGGCVCIFSEESRMNSLTEALQGLAVNYVNLTPTVLGLLNPADLPVIRTVVAGGEAMDPGIIEKWSPHARVFNSVGPSECTIIAVAAGPVTDPAQAANVGYPTGTRLWVALPTDPNQLCPVGVPGELLIEGPMLSRGYLNDPEKTAGAFITNPAFVKHLEAATPAWKVLFQKSERRFYRSGDLVRQKRDGSLVHMGRRDTQVKIRGQRVEIGEIEYWIMQRLKEVRRVAVLVIERGQGKEQKSLVAAVEFKEDYEDVRHSDDDISPVTKIGESTVLPQLLPLTEPLSKALHQLRNDLLEHLPPYMSPTMYAPVSQLPLNLSGKIDRRAVTQFINELDDVQLQQYLAVSGSHQEPSTETEFKLQKLWAKTLGVDVSQISADSHFFHIGGDSVAAMRVVAAARDVELVLRVADLFEYPRLPDLARAVESRVVDEADEEDPAPFSVWRESRGSEPSEEPVELDKIAAMCNLSKEQIEDVLPCTALQEGLIALTAQQPTAYIDRRVFALSQEVDLSQYRAAWQIVIHRTSALRTRIVSGPQTGSLQVVVVPRHIDWNKSSSLDEYLETDRQTGMMMGQPLNRFAFVDQPDGQRFFVWTTHHSTYDGWSRALVLQQVADAYASRDLPPIASFSRFIQYIHSQPQDAAASYWKAQLGGDTSADFPALPIANYRPRPQQRHQHTVNLASSSTKVMLPDLLRGAWALVVHQYVGKTDPVFAIALSGRNAPVRNVPNIAGPTLTTVPVRIFIDPEQLVNEFLQSVRQQAVDMIPYEHTGLQRIKKMVPELAAAVDLKHLFVVQPASDGESKFKIPGVTEHLVAVDEFDSYGLNVECMLSGQSIEVDVRFDEKMLSSSQVIRLMSQFEAVVHQLHLHGEGSLKIKDIDLLSPEDVNQLRQWNALPLAQPLDVCLHDLIAEVARSRPGAAAIEAWDGTLTHAQLQSYASTLAGYLIELGVGPEISVPVCMDKSVWAVVCFLAVLQAGGVVVPLGTGHPIPHIASIIEDTGAKLVLVDAQQFERLLELTPSRGLTLVPIDTQLLNSLPTAAPQTSVTPANAAWIVFTSGSTGKAKGVVLTHSNLSTAIKTHGARFGLGTHTRTIQFAAHTFDAVLQDYFTTLASGGTVCVPSEADRMNDLAGVMRGMNVNFANLTSTVARLLTPDQVPSLKVLILAGEQIQDSVVETWYKHAEVLNVYGPTECSINSTCNGPISDLSNAQSIGFGMGSRTWIADPTDPNRLCPVGTPGELLIEGPGLARGYLGDPAKTEAAIIQNPSFASRFALSDCRVYRTGDLAKQTEDGQILYLGRIDTQIKIRGQRVELGEIEHWIGRHLPHVKHTAVVAISRGEKQMRLAAVIERENGHKPDPVIFTQLKKTLSSLLPSYMVPSLYIPVTEIPLTVSGKLDRRAIKQTVESMPTEELEQYFAGESSGTRVPPSTEMEKALQRIWANSLGIEVDAIGADDNFFQLGGDSVVAMHISASSRQDQSVKGLAVGDIFMHPRLADLAVLLEKRPREGEGGWDEEMRDDESPFALLQEVLDLDLKDI.

The Carrier 1 domain occupies Ser-8–Ala-84. Ser-45 carries the O-(pantetheine 4'-phosphoryl)serine modification. A disordered region spans residues Ala-87–Ala-121. Residues Gly-108–Ala-121 are compositionally biased toward polar residues. Positions Gln-144 to Leu-568 are condensation 1. The tract at residues Leu-593–Arg-997 is adenylation 1. A Carrier 2 domain is found at Glu-1145 to Val-1221. An O-(pantetheine 4'-phosphoryl)serine modification is found at Ser-1182. Residues Asp-1226–Glu-1247 are disordered. Residues Glu-1266–Leu-1680 form a condensation 2 region. An adenylation 2 region spans residues Glu-1702 to Arg-2097. In terms of domain architecture, Carrier 3 spans Pro-2216 to Pro-2294. Ser-2253 bears the O-(pantetheine 4'-phosphoryl)serine mark.

Belongs to the NRP synthetase family.

It functions in the pathway secondary metabolite biosynthesis. Nonribosomal peptide synthetase; part of the inp gene cluster that mediates the biosynthesis of fellutamide B, a mycotoxin that acts as a proteasome inhibitor. In the first step of fellutabmide B biosynthesis inpC activates 3-hydroxydodecanoic acid to generate 3-hydroxydodecanoyl-AMP that is then loaded onto the T0 domain of inpB. The 3-hydroxydodecanoyl-S-phosphopantetheinyl-T0 is sequentially extended with L-Asn and L-Gln by the two CAT modules of inpB. The linear lipodipeptide from inpB is then transferred onto inpA for the addition of the third amino acid, L-Leu. Reductive releasing of the lipotripeptide by the TE domain of inpA produces (2S)-fellutamide B. InpF might be involved in the release and transfer of the lipodipeptide from inpB to inpA. The inp cluster-encoded proteasome subunit inpE confers resistance to internally produced fellutamides. The MFS efflux transporter inpD may contribute to fellutamide resistance as well. This is Nonribosomal peptide synthetase inpB from Emericella nidulans (strain FGSC A4 / ATCC 38163 / CBS 112.46 / NRRL 194 / M139) (Aspergillus nidulans).